We begin with the raw amino-acid sequence, 247 residues long: Probable transcriptional regulatory protein YPO2055/y2255/YP_1898 (247 aa).

The protein belongs to the TACO1 family.

The protein localises to the cytoplasm. The polypeptide is Probable transcriptional regulatory protein YPO2055/y2255/YP_1898 (Yersinia pestis).